Reading from the N-terminus, the 116-residue chain is Large ribosomal subunit protein bL17 (116 aa).

The protein belongs to the bacterial ribosomal protein bL17 family. In terms of assembly, part of the 50S ribosomal subunit. Contacts protein L32.

This chain is Large ribosomal subunit protein bL17, found in Wolinella succinogenes (strain ATCC 29543 / DSM 1740 / CCUG 13145 / JCM 31913 / LMG 7466 / NCTC 11488 / FDC 602W) (Vibrio succinogenes).